A 120-amino-acid chain; its full sequence is uncharacterized protein (120 aa).

3 consecutive transmembrane segments (helical) span residues 20–39, 52–71, and 86–108; these read FFWP…CYLL, GSSL…LFSI, and ILVV…SIIG.

The protein resides in the cell membrane. This is an uncharacterized protein from Pasteurella multocida (strain Pm70).